We begin with the raw amino-acid sequence, 625 residues long: Chaperone protein HtpG (625 aa).

The segment at Met-1–Arg-337 is a; substrate-binding. Positions Glu-338–Lys-554 are b. The c stretch occupies residues Leu-555–Gly-625.

Belongs to the heat shock protein 90 family. Homodimer.

The protein resides in the cytoplasm. Its function is as follows. Molecular chaperone. Has ATPase activity. This chain is Chaperone protein HtpG, found in Actinobacillus pleuropneumoniae serotype 3 (strain JL03).